The chain runs to 228 residues: Ribose-5-phosphate isomerase A (228 aa).

Substrate-binding positions include 32 to 35, 85 to 88, and 98 to 101; these read TGST, DGAD, and KGGG. Residue Glu107 is the Proton acceptor of the active site. Substrate is bound at residue Lys125.

It belongs to the ribose 5-phosphate isomerase family. Homodimer.

The enzyme catalyses aldehydo-D-ribose 5-phosphate = D-ribulose 5-phosphate. The protein operates within carbohydrate degradation; pentose phosphate pathway; D-ribose 5-phosphate from D-ribulose 5-phosphate (non-oxidative stage): step 1/1. Catalyzes the reversible conversion of ribose-5-phosphate to ribulose 5-phosphate. This is Ribose-5-phosphate isomerase A from Ralstonia pickettii (strain 12J).